The chain runs to 422 residues: 3-phosphoshikimate 1-carboxyvinyltransferase (422 aa).

Positions 20, 21, and 25 each coordinate 3-phosphoshikimate. K20 lines the phosphoenolpyruvate pocket. Residues G90 and R118 each contribute to the phosphoenolpyruvate site. 3-phosphoshikimate is bound by residues S161, S162, Q163, S189, D305, and K332. Position 163 (Q163) interacts with phosphoenolpyruvate. D305 acts as the Proton acceptor in catalysis. Phosphoenolpyruvate contacts are provided by R336 and R378.

This sequence belongs to the EPSP synthase family. In terms of assembly, monomer.

The protein resides in the cytoplasm. The catalysed reaction is 3-phosphoshikimate + phosphoenolpyruvate = 5-O-(1-carboxyvinyl)-3-phosphoshikimate + phosphate. The protein operates within metabolic intermediate biosynthesis; chorismate biosynthesis. In terms of biological role, catalyzes the transfer of the enolpyruvyl moiety of phosphoenolpyruvate (PEP) to the 5-hydroxyl of shikimate-3-phosphate (S3P) to produce enolpyruvyl shikimate-3-phosphate and inorganic phosphate. This chain is 3-phosphoshikimate 1-carboxyvinyltransferase, found in Nitrosopumilus maritimus (strain SCM1).